The primary structure comprises 336 residues: Anthranilate phosphoribosyltransferase (336 aa).

Residues G81, G84–D85, S89, N91–T94, K109–S117, and A121 each bind 5-phospho-alpha-D-ribose 1-diphosphate. G81 is a binding site for anthranilate. S93 provides a ligand contact to Mg(2+). Position 112 (N112) interacts with anthranilate. R167 contacts anthranilate. D225 and E226 together coordinate Mg(2+).

Belongs to the anthranilate phosphoribosyltransferase family. As to quaternary structure, homodimer. Requires Mg(2+) as cofactor.

The catalysed reaction is N-(5-phospho-beta-D-ribosyl)anthranilate + diphosphate = 5-phospho-alpha-D-ribose 1-diphosphate + anthranilate. The protein operates within amino-acid biosynthesis; L-tryptophan biosynthesis; L-tryptophan from chorismate: step 2/5. In terms of biological role, catalyzes the transfer of the phosphoribosyl group of 5-phosphorylribose-1-pyrophosphate (PRPP) to anthranilate to yield N-(5'-phosphoribosyl)-anthranilate (PRA). The sequence is that of Anthranilate phosphoribosyltransferase from Mesorhizobium japonicum (strain LMG 29417 / CECT 9101 / MAFF 303099) (Mesorhizobium loti (strain MAFF 303099)).